The following is a 534-amino-acid chain: Probable bifunctional tRNA threonylcarbamoyladenosine biosynthesis protein (534 aa).

A kae1 region spans residues 1-324; that stretch reads MICLGIEGTA…YRTDQVEVTW (324 aa). The Fe cation site is built by His108, His112, and Tyr129. Residues 129 to 133, Asp161, Gly174, Glu178, and Asn258 contribute to the L-threonylcarbamoyladenylate site; that span reads YTSGG. Asp286 contacts Fe cation. Residues 335-534 enclose the Protein kinase domain; it reads LPDNIKEKGA…DEIEKRGRYL (200 aa). ATP-binding positions include 340 to 348 and Lys361; that span reads KEKGAEADI. Catalysis depends on Asp455, which acts as the Proton acceptor; for kinase activity.

In the N-terminal section; belongs to the KAE1 / TsaD family. This sequence in the C-terminal section; belongs to the protein kinase superfamily. Tyr protein kinase family. BUD32 subfamily. As to quaternary structure, component of the KEOPS complex that consists of Kae1, Bud32, Cgi121 and Pcc1; the whole complex dimerizes. The cofactor is Fe(2+).

Its subcellular location is the cytoplasm. It carries out the reaction L-seryl-[protein] + ATP = O-phospho-L-seryl-[protein] + ADP + H(+). The catalysed reaction is L-threonyl-[protein] + ATP = O-phospho-L-threonyl-[protein] + ADP + H(+). It catalyses the reaction L-threonylcarbamoyladenylate + adenosine(37) in tRNA = N(6)-L-threonylcarbamoyladenosine(37) in tRNA + AMP + H(+). In terms of biological role, required for the formation of a threonylcarbamoyl group on adenosine at position 37 (t(6)A37) in tRNAs that read codons beginning with adenine. Is a component of the KEOPS complex that is probably involved in the transfer of the threonylcarbamoyl moiety of threonylcarbamoyl-AMP (TC-AMP) to the N6 group of A37. The Kae1 domain likely plays a direct catalytic role in this reaction. The Bud32 domain probably displays kinase activity that regulates Kae1 function. The protein is Probable bifunctional tRNA threonylcarbamoyladenosine biosynthesis protein of Methanosphaera stadtmanae (strain ATCC 43021 / DSM 3091 / JCM 11832 / MCB-3).